The following is a 424-amino-acid chain: Acetyl-CoA acetyltransferase, mitochondrial (424 aa).

The N-terminal 30 residues, M1–Y30, are a transit peptide targeting the mitochondrion. At K63 the chain carries N6-acetyllysine; alternate. N6-succinyllysine; alternate is present on K63. N6-succinyllysine is present on K75. Residue C123 is the Acyl-thioester intermediate of the active site. Residues K171, K178, K187, and K199 each carry the N6-acetyllysine; alternate modification. An N6-succinyllysine; alternate mark is found at K171, K178, K187, and K199. The residue at position 204 (S204) is a Phosphoserine. Y216 is a binding site for CoA. A K(+)-binding site is contributed by Y216. Residues K220 and K227 each carry the N6-acetyllysine; alternate modification. Residues K220 and K227 each carry the N6-succinyllysine; alternate modification. At K240 the chain carries N6-succinyllysine. Residue K242 is modified to N6-acetyllysine; alternate. Position 242 is an N6-succinyllysine; alternate (K242). N6-acetyllysine occurs at positions 248 and 254. Residues R255–D257 and K260 each bind CoA. N6-acetyllysine; alternate is present on K260. The residue at position 260 (K260) is an N6-succinyllysine; alternate. N6-succinyllysine occurs at positions 263 and 265. K270 is modified (N6-acetyllysine). K(+)-binding residues include A277, A278, and A280. Residue S281 participates in CoA binding. K335 bears the N6-acetyllysine mark. A K(+)-binding site is contributed by V378. The Proton donor/acceptor role is filled by C410.

This sequence belongs to the thiolase-like superfamily. Thiolase family. Homotetramer. Succinylation at Lys-265, adjacent to a coenzyme A binding site. Desuccinylated by SIRT5.

It localises to the mitochondrion. It catalyses the reaction 2 acetyl-CoA = acetoacetyl-CoA + CoA. The catalysed reaction is propanoyl-CoA + acetyl-CoA = 2-methyl-3-oxobutanoyl-CoA + CoA. Its pathway is lipid metabolism; fatty acid beta-oxidation. Activated by potassium ions, but not sodium ions. In terms of biological role, this is one of the enzymes that catalyzes the last step of the mitochondrial beta-oxidation pathway, an aerobic process breaking down fatty acids into acetyl-CoA. Using free coenzyme A/CoA, catalyzes the thiolytic cleavage of medium- to long-chain 3-oxoacyl-CoAs into acetyl-CoA and a fatty acyl-CoA shortened by two carbon atoms. The activity of the enzyme is reversible and it can also catalyze the condensation of two acetyl-CoA molecules into acetoacetyl-CoA. Thereby, it plays a major role in ketone body metabolism. This chain is Acetyl-CoA acetyltransferase, mitochondrial (Acat1), found in Rattus norvegicus (Rat).